Reading from the N-terminus, the 514-residue chain is Light-independent protochlorophyllide reductase subunit B (514 aa).

Aspartate 36 is a binding site for [4Fe-4S] cluster. Catalysis depends on aspartate 300, which acts as the Proton donor. 435-436 serves as a coordination point for substrate; the sequence is GM.

The protein belongs to the ChlB/BchB/BchZ family. Protochlorophyllide reductase is composed of three subunits; ChlL, ChlN and ChlB. Forms a heterotetramer of two ChlB and two ChlN subunits. The cofactor is [4Fe-4S] cluster.

Its subcellular location is the plastid. The protein resides in the chloroplast. It catalyses the reaction chlorophyllide a + oxidized 2[4Fe-4S]-[ferredoxin] + 2 ADP + 2 phosphate = protochlorophyllide a + reduced 2[4Fe-4S]-[ferredoxin] + 2 ATP + 2 H2O. It functions in the pathway porphyrin-containing compound metabolism; chlorophyll biosynthesis (light-independent). Its function is as follows. Component of the dark-operative protochlorophyllide reductase (DPOR) that uses Mg-ATP and reduced ferredoxin to reduce ring D of protochlorophyllide (Pchlide) to form chlorophyllide a (Chlide). This reaction is light-independent. The NB-protein (ChlN-ChlB) is the catalytic component of the complex. This chain is Light-independent protochlorophyllide reductase subunit B, found in Pleurastrum terricola (Filamentous green alga).